We begin with the raw amino-acid sequence, 243 residues long: PF03932 family protein CutC (243 aa).

This sequence belongs to the CutC family.

It is found in the cytoplasm. This is PF03932 family protein CutC from Parabacteroides distasonis (strain ATCC 8503 / DSM 20701 / CIP 104284 / JCM 5825 / NCTC 11152).